We begin with the raw amino-acid sequence, 201 residues long: 3-isopropylmalate dehydratase small subunit (201 aa).

This sequence belongs to the LeuD family. LeuD type 1 subfamily. In terms of assembly, heterodimer of LeuC and LeuD.

The enzyme catalyses (2R,3S)-3-isopropylmalate = (2S)-2-isopropylmalate. It participates in amino-acid biosynthesis; L-leucine biosynthesis; L-leucine from 3-methyl-2-oxobutanoate: step 2/4. Functionally, catalyzes the isomerization between 2-isopropylmalate and 3-isopropylmalate, via the formation of 2-isopropylmaleate. This Rhizobium meliloti (strain 1021) (Ensifer meliloti) protein is 3-isopropylmalate dehydratase small subunit.